Here is a 328-residue protein sequence, read N- to C-terminus: Ubiquitin carboxyl-terminal hydrolase isozyme L5 (328 aa).

Residues 7 to 225 (EWCLMESDPG…IRFNLMAIVS (219 aa)) form the UCH catalytic domain. N6-succinyllysine is present on Lys-47. Residue Cys-88 is the Nucleophile of the active site. Lys-158 is subject to N6-acetyllysine. His-164 functions as the Proton donor in the catalytic mechanism. Lys-288 bears the N6-succinyllysine mark. The region spanning 290–318 (NYLPFIMELLKTLAEHQQLIPLVEKAKEK) is the ULD domain. An interaction with ADRM1 region spans residues 312-328 (VEKAKEKQNAKKAQETK).

The protein belongs to the peptidase C12 family. In terms of assembly, component of the 19S (PA700) regulatory complex of the 26S proteasome. Interacts with ADRM1 and NFRKB. Component of the INO80 complex; specifically part of a complex module associated with N-terminus of INO80.

The protein localises to the cytoplasm. It localises to the nucleus. It carries out the reaction Thiol-dependent hydrolysis of ester, thioester, amide, peptide and isopeptide bonds formed by the C-terminal Gly of ubiquitin (a 76-residue protein attached to proteins as an intracellular targeting signal).. Activated by ADRM1. Inhibited by interaction with NFRKB. Protease that specifically cleaves 'Lys-48'-linked polyubiquitin chains. Deubiquitinating enzyme associated with the 19S regulatory subunit of the 26S proteasome. Putative regulatory component of the INO80 complex; however is inactive in the INO80 complex and is activated by a transient interaction of the INO80 complex with the proteasome via ADRM1. In Bos taurus (Bovine), this protein is Ubiquitin carboxyl-terminal hydrolase isozyme L5 (UCHL5).